Here is a 472-residue protein sequence, read N- to C-terminus: ATP synthase subunit beta (472 aa).

Residue 157–164 (GGAGVGKT) participates in ATP binding.

The protein belongs to the ATPase alpha/beta chains family. F-type ATPases have 2 components, CF(1) - the catalytic core - and CF(0) - the membrane proton channel. CF(1) has five subunits: alpha(3), beta(3), gamma(1), delta(1), epsilon(1). CF(0) has three main subunits: a(1), b(2) and c(9-12). The alpha and beta chains form an alternating ring which encloses part of the gamma chain. CF(1) is attached to CF(0) by a central stalk formed by the gamma and epsilon chains, while a peripheral stalk is formed by the delta and b chains.

It localises to the cell membrane. It carries out the reaction ATP + H2O + 4 H(+)(in) = ADP + phosphate + 5 H(+)(out). In terms of biological role, produces ATP from ADP in the presence of a proton gradient across the membrane. The catalytic sites are hosted primarily by the beta subunits. The sequence is that of ATP synthase subunit beta from Desulforamulus reducens (strain ATCC BAA-1160 / DSM 100696 / MI-1) (Desulfotomaculum reducens).